The primary structure comprises 647 residues: Probable inactive receptor kinase RLK902 (647 aa).

The first 29 residues, 1–29 (MRLFFTPSMSNLSIFFSILLLSLPLPSIG), serve as a signal peptide directing secretion. LRR repeat units lie at residues 69-93 (GGRV…IFGN), 94-118 (LTQL…LGSC), 119-142 (SDLR…LFSL), 144-165 (NLVR…GFKN), and 166-192 (LTRL…SLDQ). The chain crosses the membrane as a helical span at residues 268–288 (GIVIGCVVGLSLIVMILMVLF). Residues 365–639 (RASAEVLGKG…EVVRRIQELR (275 aa)) form the Protein kinase domain. Position 367 is a phosphoserine (S367). An ATP-binding site is contributed by 371–379 (LGKGTFGTA). A Phosphothreonine modification is found at T388. K393 contributes to the ATP binding site. Phosphoserine is present on S444. T520 is subject to Phosphothreonine. S540 bears the Phosphoserine mark. T618 is modified (phosphothreonine).

Belongs to the protein kinase superfamily. Ser/Thr protein kinase family. Interacts with At3g17950, At3g27210 and At5g05190. Autophosphorylation. As to expression, expressed in root tips, lateral root primordia, stipules, and floral organ abscission zones.

It localises to the cell membrane. This Arabidopsis thaliana (Mouse-ear cress) protein is Probable inactive receptor kinase RLK902 (RLK902).